A 235-amino-acid polypeptide reads, in one-letter code: Large ribosomal subunit protein uL1 (235 aa).

This sequence belongs to the universal ribosomal protein uL1 family. As to quaternary structure, part of the 50S ribosomal subunit.

Its function is as follows. Binds directly to 23S rRNA. The L1 stalk is quite mobile in the ribosome, and is involved in E site tRNA release. Protein L1 is also a translational repressor protein, it controls the translation of the L11 operon by binding to its mRNA. This is Large ribosomal subunit protein uL1 from Lawsonia intracellularis (strain PHE/MN1-00).